We begin with the raw amino-acid sequence, 684 residues long: uncharacterized protein (684 aa).

Disordered regions lie at residues 267–353 and 388–449; these read MGAR…TCTD and SVAS…AERE. Polar residues predominate over residues 316 to 326; the sequence is GMTSAKASTSY. Positions 438–449 are enriched in basic and acidic residues; that stretch reads RPTEARRRAERE.

This is an uncharacterized protein from Colorado tick fever virus (strain USA/Florio N-7180) (CTFV).